We begin with the raw amino-acid sequence, 97 residues long: MESSSSSSGSALAAVDPQLQHFIEVETQKQRFQQLVHQMTELCWEKCMDKPGPKLDSRAEACFVNCVERFIDTSQFILNRLEQTQKSKPVFSESLSD.

The short motif at 43–66 (CWEKCMDKPGPKLDSRAEACFVNC) is the Twin CX3C motif element. 2 cysteine pairs are disulfide-bonded: C43–C66 and C47–C62. 4 positions are modified to phosphoserine: S57, S87, S94, and S96.

This sequence belongs to the small Tim family. As to quaternary structure, heterohexamer; composed of 3 copies of TIMM8A and 3 copies of TIMM13, named soluble 70 kDa complex. Associates with the TIM22 complex, whose core is composed of TIMM22.

The protein resides in the mitochondrion inner membrane. Mitochondrial intermembrane chaperone that participates in the import and insertion of some multi-pass transmembrane proteins into the mitochondrial inner membrane. Also required for the transfer of beta-barrel precursors from the TOM complex to the sorting and assembly machinery (SAM complex) of the outer membrane. Acts as a chaperone-like protein that protects the hydrophobic precursors from aggregation and guide them through the mitochondrial intermembrane space. The TIMM8-TIMM13 complex mediates the import of proteins such as TIMM23, SLC25A12/ARALAR1 and SLC25A13/ARALAR2, while the predominant TIMM9-TIMM10 70 kDa complex mediates the import of much more proteins. This is Mitochondrial import inner membrane translocase subunit Tim8 A (Timm8a) from Rattus norvegicus (Rat).